Reading from the N-terminus, the 534-residue chain is MKKLTIVPSSFRLLSIGSYVELIEANGRDRLFCRGRVLHAHLVTSGIARLTRIAAKLVTFYVECGKVLDARKVFDEMPKRDISGCVVMIGACARNGYYQESLDFFREMYKDGLKLDAFIVPSLLKASRNLLDREFGKMIHCLVLKFSYESDAFIVSSLIDMYSKFGEVGNARKVFSDLGEQDLVVFNAMISGYANNSQADEALNLVKDMKLLGIKPDVITWNALISGFSHMRNEEKVSEILELMCLDGYKPDVVSWTSIISGLVHNFQNEKAFDAFKQMLTHGLYPNSATIITLLPACTTLAYMKHGKEIHGYSVVTGLEDHGFVRSALLDMYGKCGFISEAMILFRKTPKKTTVTFNSMIFCYANHGLADKAVELFDQMEATGEKLDHLTFTAILTACSHAGLTDLGQNLFLLMQNKYRIVPRLEHYACMVDLLGRAGKLVEAYEMIKAMRMEPDLFVWGALLAACRNHGNMELARIAAKHLAELEPENSGNGLLLTSLYANAGSWESVVRMKKMIKKKRFRRFLGSSWVETV.

PPR repeat units follow at residues 50 to 80, 81 to 115, 116 to 150, 151 to 181, 182 to 216, 217 to 251, 252 to 286, 287 to 321, 322 to 352, 353 to 387, 388 to 418, and 424 to 454; these read LTRIAAKLVTFYVECGKVLDARKVFDEMPKR, DISGCVVMIGACARNGYYQESLDFFREMYKDGLKL, DAFIVPSLLKASRNLLDREFGKMIHCLVLKFSYES, DAFIVSSLIDMYSKFGEVGNARKVFSDLGEQ, DLVVFNAMISGYANNSQADEALNLVKDMKLLGIKP, DVITWNALISGFSHMRNEEKVSEILELMCLDGYKP, DVVSWTSIISGLVHNFQNEKAFDAFKQMLTHGLYP, NSATIITLLPACTTLAYMKHGKEIHGYSVVTGLED, HGFVRSALLDMYGKCGFISEAMILFRKTPKK, TTVTFNSMIFCYANHGLADKAVELFDQMEATGEKL, DHLTFTAILTACSHAGLTDLGQNLFLLMQNK, and RLEHYACMVDLLGRAGKLVEAYEMIKAMRME. Residues 459-534 are type E motif; sequence VWGALLAACR…FLGSSWVETV (76 aa).

It belongs to the PPR family. PCMP-E subfamily.

The sequence is that of Pentatricopeptide repeat-containing protein At5g59600 (PCMP-E1) from Arabidopsis thaliana (Mouse-ear cress).